We begin with the raw amino-acid sequence, 550 residues long: Medium-chain acyl-CoA ligase Mig (550 aa).

An N-terminal signal peptide occupies residues 1–19 (MSDTTTAFTVPAVAKAVAA).

Belongs to the ATP-dependent AMP-binding enzyme family.

The protein resides in the secreted. It is found in the cell wall. It catalyses the reaction a medium-chain fatty acid + ATP + CoA = a medium-chain fatty acyl-CoA + AMP + diphosphate. The catalysed reaction is hexanoate + ATP + CoA = hexanoyl-CoA + AMP + diphosphate. It carries out the reaction heptanoate + ATP + CoA = heptanoyl-CoA + AMP + diphosphate. The enzyme catalyses octanoate + ATP + CoA = octanoyl-CoA + AMP + diphosphate. It catalyses the reaction decanoate + ATP + CoA = decanoyl-CoA + AMP + diphosphate. The catalysed reaction is dodecanoate + ATP + CoA = dodecanoyl-CoA + AMP + diphosphate. It carries out the reaction tetradecanoate + ATP + CoA = tetradecanoyl-CoA + AMP + diphosphate. The enzyme catalyses (9Z)-octadecenoate + ATP + CoA = (9Z)-octadecenoyl-CoA + AMP + diphosphate. It catalyses the reaction (9Z,12Z,15Z)-octadecatrienoate + ATP + CoA = (9Z,12Z,15Z)-octadecatrienoyl-CoA + AMP + diphosphate. The catalysed reaction is (5Z,8Z,11Z,14Z)-eicosatetraenoate + ATP + CoA = (5Z,8Z,11Z,14Z)-eicosatetraenoyl-CoA + AMP + diphosphate. Its pathway is lipid metabolism; fatty acid metabolism. Inhibited by 2-hydroxydodecanoic acid, a typical inhibitor of medium-chain acyl-CoA synthetases. In terms of biological role, catalyzes the activation of medium-chain fatty acids as acyl-coenzyme A (acyl-CoA). Shows maximal activity with saturated fatty acids of medium-chain length between C6 and C12. Has lower activity with tridecanoic acid (C13), tetradecanoic acid (C14) and with unsaturated fatty acids like oleic acid (C18:1), linolenic acid (C18:3) and arachidonic acid (C20:4). Shows weak activity with some aromatic carbon acids. Involved in the metabolism of fatty acid during mycobacterial survival in macrophages. This is Medium-chain acyl-CoA ligase Mig from Mycobacterium avium.